A 331-amino-acid polypeptide reads, in one-letter code: Serine/threonine-protein phosphatase PP1 isozyme 7 (331 aa).

Met-1 is subject to N-acetylmethionine. 4 residues coordinate Mn(2+): Asp-60, His-62, Asp-88, and Asn-120. The Proton donor role is filled by His-121. The Mn(2+) site is built by His-169 and His-244.

The protein belongs to the PPP phosphatase family. PP-1 subfamily. Mn(2+) serves as cofactor. Expressed in roots, rosettes and flowers.

It localises to the nucleus. The protein localises to the cytoplasm. It carries out the reaction O-phospho-L-seryl-[protein] + H2O = L-seryl-[protein] + phosphate. The catalysed reaction is O-phospho-L-threonyl-[protein] + H2O = L-threonyl-[protein] + phosphate. Phosphatase activity is strongly reduced by the protein phosphatase inhibitor 2 (I-2). Serine/threonine-protein phosphatase that possesses phosphatase activity toward para-nitrophenyl phosphate (pNPP) in vitro. In Arabidopsis thaliana (Mouse-ear cress), this protein is Serine/threonine-protein phosphatase PP1 isozyme 7.